The sequence spans 101 residues: Urease subunit beta (101 aa).

Belongs to the urease beta subunit family. As to quaternary structure, heterotrimer of UreA (gamma), UreB (beta) and UreC (alpha) subunits. Three heterotrimers associate to form the active enzyme.

The protein resides in the cytoplasm. The catalysed reaction is urea + 2 H2O + H(+) = hydrogencarbonate + 2 NH4(+). It functions in the pathway nitrogen metabolism; urea degradation; CO(2) and NH(3) from urea (urease route): step 1/1. The polypeptide is Urease subunit beta (Cereibacter sphaeroides (strain ATCC 17029 / ATH 2.4.9) (Rhodobacter sphaeroides)).